The sequence spans 766 residues: Phosphoribosylformylglycinamidine synthase subunit PurL (766 aa).

Residue histidine 66 is part of the active site. Residues tyrosine 69 and lysine 113 each coordinate ATP. Position 115 (glutamate 115) interacts with Mg(2+). Residues serine 116–histidine 119 and arginine 138 contribute to the substrate site. Histidine 117 functions as the Proton acceptor in the catalytic mechanism. Aspartate 139 is a binding site for Mg(2+). Glutamine 264 contacts substrate. Aspartate 292 is a Mg(2+) binding site. Glutamate 336 to glutamine 338 contributes to the substrate binding site. ATP is bound by residues asparagine 524 and glycine 561. Asparagine 562 contributes to the Mg(2+) binding site. Serine 564 contributes to the substrate binding site.

Belongs to the FGAMS family. As to quaternary structure, monomer. Part of the FGAM synthase complex composed of 1 PurL, 1 PurQ and 2 PurS subunits.

The protein resides in the cytoplasm. The enzyme catalyses N(2)-formyl-N(1)-(5-phospho-beta-D-ribosyl)glycinamide + L-glutamine + ATP + H2O = 2-formamido-N(1)-(5-O-phospho-beta-D-ribosyl)acetamidine + L-glutamate + ADP + phosphate + H(+). It participates in purine metabolism; IMP biosynthesis via de novo pathway; 5-amino-1-(5-phospho-D-ribosyl)imidazole from N(2)-formyl-N(1)-(5-phospho-D-ribosyl)glycinamide: step 1/2. Functionally, part of the phosphoribosylformylglycinamidine synthase complex involved in the purines biosynthetic pathway. Catalyzes the ATP-dependent conversion of formylglycinamide ribonucleotide (FGAR) and glutamine to yield formylglycinamidine ribonucleotide (FGAM) and glutamate. The FGAM synthase complex is composed of three subunits. PurQ produces an ammonia molecule by converting glutamine to glutamate. PurL transfers the ammonia molecule to FGAR to form FGAM in an ATP-dependent manner. PurS interacts with PurQ and PurL and is thought to assist in the transfer of the ammonia molecule from PurQ to PurL. This Mycobacterium tuberculosis (strain CDC 1551 / Oshkosh) protein is Phosphoribosylformylglycinamidine synthase subunit PurL.